We begin with the raw amino-acid sequence, 2410 residues long: Cell wall alpha-1,3-glucan synthase ags1 (2410 aa).

A phosphoserine mark is found at Ser-1643, Ser-1644, and Ser-1651. Phosphothreonine is present on Thr-1653. The segment at Ser-1685–Leu-1706 is disordered. Ser-1738 and Ser-1812 each carry phosphoserine. The disordered stretch occupies residues Gln-1796–Arg-1827. The segment covering Pro-1802–Arg-1827 has biased composition (low complexity).

This sequence belongs to the glycosyltransferase group 1 family. As to quaternary structure, interacts with sad1.

The catalysed reaction is [(1-&gt;3)-alpha-D-glucosyl](n) + UDP-alpha-D-glucose = [(1-&gt;3)-alpha-D-glucosyl](n+1) + UDP + H(+). Required for alpha-1,3-glucan and alpha-1,4-glucan production which are required for cell wall synthesis. The polypeptide is Cell wall alpha-1,3-glucan synthase ags1 (ags1) (Schizosaccharomyces pombe (strain 972 / ATCC 24843) (Fission yeast)).